Reading from the N-terminus, the 27-residue chain is Pregnancy-associated glycoprotein 55 (27 aa).

The protein belongs to the peptidase A1 family. Post-translationally, glycosylated. In terms of tissue distribution, placenta.

The polypeptide is Pregnancy-associated glycoprotein 55 (PAG55) (Capra hircus (Goat)).